Here is a 540-residue protein sequence, read N- to C-terminus: Beta-secretase (540 aa).

Residues 1–31 (MHFSLPTSRIVVVVPAAAICIVCVLIETCTA) form the signal peptide. A Peptidase A1 domain is found at 81-435 (YYIEVDIGTP…DRENKRVGFA (355 aa)). Catalysis depends on residues Asp99 and Asp302. 3 disulfides stabilise this stretch: Cys222–Cys439, Cys291–Cys469, and Cys345–Cys397. A helical membrane pass occupies residues 483–503 (ITAYVLAAICLVCLIPVIVFA). Topologically, residues 504–540 (LTHQINKRCKGRRGRGVVNHHRLDQEGLAENEPNSDP) are cytoplasmic.

The protein belongs to the peptidase A1 family.

Its subcellular location is the membrane. This is Beta-secretase from Strongylocentrotus purpuratus (Purple sea urchin).